Here is a 651-residue protein sequence, read N- to C-terminus: Probable potassium transport system protein Kup (651 aa).

Helical transmembrane passes span 41–61 (LVLGALGVVYGDIGTSPIYAF), 82–102 (VVSLIFWALTLVVTVKYVLFV), 130–150 (LILGVGICGAALFFGDAVITP), 163–183 (IVAPNLTPFVVPAAVVILVTL), 194–214 (VAIVFGPIMALWFVALGASGL), 235–255 (FLTVSPAVAFVTVGAVFLAMT), 276–296 (WLWIVFPCLLLNYFGQAAFIL), 309–329 (MIPSFALWPMVLLATAATVIA), 366–386 (IYIPRVNLLLGLAVVILVLGF), 395–415 (AYGIAVTGNMLVTTVLLYIAM), 426–446 (ALPIILGFLVIDMLFFSANII), and 450–470 (EGGWASIGIATVLVLIMWTWV).

This sequence belongs to the HAK/KUP transporter (TC 2.A.72) family.

The protein localises to the cell inner membrane. It catalyses the reaction K(+)(in) + H(+)(in) = K(+)(out) + H(+)(out). In terms of biological role, transport of potassium into the cell. Likely operates as a K(+):H(+) symporter. This Brucella abortus (strain S19) protein is Probable potassium transport system protein Kup.